The sequence spans 251 residues: Squamosa promoter-binding-like protein 4 (251 aa).

Over residues 1 to 15 (MDWMPPPKPTSPRSP) the composition is skewed to pro residues. Positions 1–64 (MDWMPPPKPT…RAEEGGGGGG (64 aa)) are disordered. Over residues 24–43 (AAVPGSSSGEVSAAAAAAAA) the composition is skewed to low complexity. The SBP-type zinc finger occupies 65–142 (EVRCQVEGCG…YDHNARRRKP (78 aa)). Zn(2+) is bound by residues cysteine 68, cysteine 73, cysteine 90, histidine 93, cysteine 109, cysteine 112, histidine 116, and cysteine 128. The Bipartite nuclear localization signal signature appears at 125 to 141 (KRSCRRRLYDHNARRRK).

As to expression, expressed in stems, leaf sheaths, and young panicles.

Its subcellular location is the nucleus. Trans-acting factor that binds specifically to the consensus nucleotide sequence 5'-TNCGTACAA-3'. May be involved in panicle development. This chain is Squamosa promoter-binding-like protein 4 (SPL4), found in Oryza sativa subsp. japonica (Rice).